Here is a 286-residue protein sequence, read N- to C-terminus: 33 kDa chaperonin (286 aa).

Disulfide bonds link Cys-225–Cys-227 and Cys-258–Cys-261.

This sequence belongs to the HSP33 family. In terms of processing, under oxidizing conditions two disulfide bonds are formed involving the reactive cysteines. Under reducing conditions zinc is bound to the reactive cysteines and the protein is inactive.

The protein localises to the cytoplasm. Its function is as follows. Redox regulated molecular chaperone. Protects both thermally unfolding and oxidatively damaged proteins from irreversible aggregation. Plays an important role in the bacterial defense system toward oxidative stress. This Shewanella sediminis (strain HAW-EB3) protein is 33 kDa chaperonin.